Here is a 393-residue protein sequence, read N- to C-terminus: MPGIRGPSEYSQEPPRHPSLKVNAKEPFNAEPPRSALVSSYVTPVDLFYKRNHGPIPIVDHLQSYSVTLTGLIQNPRKLFIKDIRSLPKYNVTATLQCAGNRRTAMSKVRNVRGVGWDVSAIGNAVWGGAKLADVLELVGIPKLTASTNLGARHVEFVSVDRCKEENGGPYKASITLSQATNPEADVLLAYEMNGETLNRDHGFPLRVVVPGVIGARSVKWLDSINVIAEESQGFFMQKDYKMFPPSVNWDNINWSSRRPQMDFPVQSAICSVEDVQMVKPGKVSIKGYAVSGGGRGIERVDISLDGGKNWVEASRTQEPGKQYISEHSSSDKWAWVLFEATIDVSQTTEVIAKAVDSAANVQPENVESVWNLRGVLNTSWHRVLLRLGHSNL.

The interval 1–27 (MPGIRGPSEYSQEPPRHPSLKVNAKEP) is disordered. Residues 10–242 (YSQEPPRHPS…QGFFMQKDYK (233 aa)) are moco domain. Residues 49–53 (YKRNH), Cys98, 159–161 (SVD), His202, Arg207, and 218–220 (SVK) each bind Mo-molybdopterin. Positions 243–393 (MFPPSVNWDN…VLLRLGHSNL (151 aa)) are homodimerization. The Microbody targeting signal motif lies at 391–393 (SNL).

As to quaternary structure, predominantly monomer; also homodimer. Mo-molybdopterin is required as a cofactor.

Its subcellular location is the peroxisome. The enzyme catalyses sulfite + O2 + H2O = sulfate + H2O2. Its pathway is energy metabolism; sulfur metabolism. Probably involved in sulfite oxidative detoxification. This chain is Sulfite oxidase (SOX), found in Arabidopsis thaliana (Mouse-ear cress).